Reading from the N-terminus, the 407-residue chain is Imidazolonepropionase (407 aa).

Fe(3+) contacts are provided by His-68 and His-70. Positions 68 and 70 each coordinate Zn(2+). 4-imidazolone-5-propanoate-binding residues include Arg-77, Tyr-140, and His-173. Residue Tyr-140 participates in N-formimidoyl-L-glutamate binding. Position 238 (His-238) interacts with Fe(3+). Zn(2+) is bound at residue His-238. Residue Gln-241 coordinates 4-imidazolone-5-propanoate. Asp-313 provides a ligand contact to Fe(3+). Residue Asp-313 participates in Zn(2+) binding. Asn-315 and Gly-317 together coordinate N-formimidoyl-L-glutamate. Position 318 (Thr-318) interacts with 4-imidazolone-5-propanoate.

It belongs to the metallo-dependent hydrolases superfamily. HutI family. Zn(2+) is required as a cofactor. The cofactor is Fe(3+).

It localises to the cytoplasm. It catalyses the reaction 4-imidazolone-5-propanoate + H2O = N-formimidoyl-L-glutamate. The protein operates within amino-acid degradation; L-histidine degradation into L-glutamate; N-formimidoyl-L-glutamate from L-histidine: step 3/3. Catalyzes the hydrolytic cleavage of the carbon-nitrogen bond in imidazolone-5-propanoate to yield N-formimidoyl-L-glutamate. It is the third step in the universal histidine degradation pathway. The chain is Imidazolonepropionase from Burkholderia mallei (strain ATCC 23344).